We begin with the raw amino-acid sequence, 80 residues long: MAGGPRRGGRRRKKVCYFTANGITHIDYKDTELLKRFISERGKILPRRVTGTSAKYQRMLTTAIKRSRHMALLPYVKEEQ.

The protein belongs to the bacterial ribosomal protein bS18 family. As to quaternary structure, part of the 30S ribosomal subunit. Forms a tight heterodimer with protein bS6.

In terms of biological role, binds as a heterodimer with protein bS6 to the central domain of the 16S rRNA, where it helps stabilize the platform of the 30S subunit. This is Small ribosomal subunit protein bS18 from Staphylococcus aureus (strain Mu3 / ATCC 700698).